Reading from the N-terminus, the 442-residue chain is ATP-dependent protease ATPase subunit HslU (442 aa).

Residues Ile-18 and 60–65 (GVGKTE) each bind ATP. The tract at residues 133 to 156 (DALLPKPKNDWDNTDSDTSSNTRQ) is disordered. 3 residues coordinate ATP: Asp-255, Glu-320, and Arg-392.

The protein belongs to the ClpX chaperone family. HslU subfamily. In terms of assembly, a double ring-shaped homohexamer of HslV is capped on each side by a ring-shaped HslU homohexamer. The assembly of the HslU/HslV complex is dependent on binding of ATP.

It is found in the cytoplasm. Functionally, ATPase subunit of a proteasome-like degradation complex; this subunit has chaperone activity. The binding of ATP and its subsequent hydrolysis by HslU are essential for unfolding of protein substrates subsequently hydrolyzed by HslV. HslU recognizes the N-terminal part of its protein substrates and unfolds these before they are guided to HslV for hydrolysis. The sequence is that of ATP-dependent protease ATPase subunit HslU from Shewanella sp. (strain ANA-3).